The primary structure comprises 244 residues: Flavin-dependent thymidylate synthase (244 aa).

In terms of domain architecture, ThyX spans 7–199 (PRVFLIASWG…PNLARLVWED (193 aa)). FAD is bound by residues S60 and 83–85 (RHR). DUMP contacts are provided by residues 80-83 (QFIR), 93-95 (SQR), and R137. The short motif at 83-93 (RHRMASYWSES) is the ThyX motif element. FAD is bound by residues 153–155 (NAR) and N160. R165 lines the dUMP pocket. The Involved in ionization of N3 of dUMP, leading to its activation role is filled by R165.

The protein belongs to the thymidylate synthase ThyX family. Homotetramer. Requires FAD as cofactor.

It carries out the reaction dUMP + (6R)-5,10-methylene-5,6,7,8-tetrahydrofolate + NADPH + H(+) = dTMP + (6S)-5,6,7,8-tetrahydrofolate + NADP(+). Its pathway is pyrimidine metabolism; dTTP biosynthesis. Catalyzes the reductive methylation of 2'-deoxyuridine-5'-monophosphate (dUMP) to 2'-deoxythymidine-5'-monophosphate (dTMP) while utilizing 5,10-methylenetetrahydrofolate (mTHF) as the methyl donor, and NADPH and FADH(2) as the reductant. In Pyrobaculum aerophilum (strain ATCC 51768 / DSM 7523 / JCM 9630 / CIP 104966 / NBRC 100827 / IM2), this protein is Flavin-dependent thymidylate synthase.